The primary structure comprises 241 residues: MTASADIRLSDVRFSYGETAMHFDVTITGGEIAAIVGPSGSGKSTFLNLIAGFETPQSGIISINGVDVTHLPPADRPVSMVFQENNLFAHLTVEQNVDLGRSPNLRLNEEDRKAVASALARVGLQGKEKRKPEALSGGERQRVAIARVLVRERPVLLLDEAFASLGPALRHQMLDLVNKLRRETGMTVLMVTHTPEDALHLDALLIFLDNGKIAAQGPATEMLSRAGPEALRHYIGEMRSF.

Residues 7–235 form the ABC transporter domain; sequence IRLSDVRFSY…AGPEALRHYI (229 aa). 37–44 serves as a coordination point for ATP; it reads GPSGSGKS.

It belongs to the ABC transporter superfamily. Thiamine importer (TC 3.A.1.19.1) family. In terms of assembly, the complex is composed of two ATP-binding proteins (ThiQ), two transmembrane proteins (ThiP) and a solute-binding protein (ThiB).

The protein resides in the cell inner membrane. It carries out the reaction thiamine(out) + ATP + H2O = thiamine(in) + ADP + phosphate + H(+). Functionally, part of the ABC transporter complex ThiBPQ involved in thiamine import. Responsible for energy coupling to the transport system. This Brucella melitensis biotype 1 (strain ATCC 23456 / CCUG 17765 / NCTC 10094 / 16M) protein is Thiamine import ATP-binding protein ThiQ.